The chain runs to 235 residues: 15,16-dihydrobiliverdin:ferredoxin oxidoreductase (235 aa).

Belongs to the HY2 family.

The enzyme catalyses 15,16-dihydrobiliverdin + oxidized 2[4Fe-4S]-[ferredoxin] = biliverdin IXalpha + reduced 2[4Fe-4S]-[ferredoxin] + 2 H(+). Its function is as follows. Catalyzes the two-electron reduction of biliverdin IX-alpha at the C15 methine bridge. The protein is 15,16-dihydrobiliverdin:ferredoxin oxidoreductase of Synechococcus sp. (strain CC9902).